The chain runs to 473 residues: Photosystem II CP43 reaction center protein (473 aa).

Residues 1–14 constitute a propeptide that is removed on maturation; sequence MKILYSPRRFYPVE. Thr-15 carries the N-acetylthreonine modification. Thr-15 carries the post-translational modification Phosphothreonine. 5 helical membrane-spanning segments follow: residues 69–93, 134–155, 178–200, 255–275, and 291–312; these read LFEVAHFVSEKPMYEQGLILLPHLA, LIGPETLEESFPFFGYTWKDKN, KALYFGGLYDTWAPGGGDVREIT, KPFAWARRAFVWSGEAYLSYS, and WFNNTAYPSEFYGPTGPEASQA. Glu-367 is a [CaMn4O5] cluster binding site. The helical transmembrane segment at 447 to 471 threads the bilayer; the sequence is RARAAAAGFEKGIDRDTEPVLSMTP.

It belongs to the PsbB/PsbC family. PsbC subfamily. PSII is composed of 1 copy each of membrane proteins PsbA, PsbB, PsbC, PsbD, PsbE, PsbF, PsbH, PsbI, PsbJ, PsbK, PsbL, PsbM, PsbT, PsbX, PsbY, PsbZ, Psb30/Ycf12, at least 3 peripheral proteins of the oxygen-evolving complex and a large number of cofactors. It forms dimeric complexes. The cofactor is Binds multiple chlorophylls and provides some of the ligands for the Ca-4Mn-5O cluster of the oxygen-evolving complex. It may also provide a ligand for a Cl- that is required for oxygen evolution. PSII binds additional chlorophylls, carotenoids and specific lipids..

It is found in the plastid. Its subcellular location is the chloroplast thylakoid membrane. Functionally, one of the components of the core complex of photosystem II (PSII). It binds chlorophyll and helps catalyze the primary light-induced photochemical processes of PSII. PSII is a light-driven water:plastoquinone oxidoreductase, using light energy to abstract electrons from H(2)O, generating O(2) and a proton gradient subsequently used for ATP formation. The polypeptide is Photosystem II CP43 reaction center protein (Adiantum capillus-veneris (Maidenhair fern)).